The primary structure comprises 480 residues: Glycogen synthase (480 aa).

Lys15 provides a ligand contact to ADP-alpha-D-glucose.

Belongs to the glycosyltransferase 1 family. Bacterial/plant glycogen synthase subfamily.

It carries out the reaction [(1-&gt;4)-alpha-D-glucosyl](n) + ADP-alpha-D-glucose = [(1-&gt;4)-alpha-D-glucosyl](n+1) + ADP + H(+). Its pathway is glycan biosynthesis; glycogen biosynthesis. In terms of biological role, synthesizes alpha-1,4-glucan chains using ADP-glucose. This Granulibacter bethesdensis (strain ATCC BAA-1260 / CGDNIH1) protein is Glycogen synthase.